The sequence spans 279 residues: Phosphonates import ATP-binding protein PhnC 2 (279 aa).

The 244-residue stretch at 10–253 folds into the ABC transporter domain; that stretch reads LSLKGVSVRY…VARNLYAKQS (244 aa). An ATP-binding site is contributed by 43-50; that stretch reads GASGAGKS. A compositionally biased stretch (low complexity) spans 253–262; that stretch reads SNASNTSAST. Residues 253 to 279 form a disordered region; it reads SNASNTSASTDSPRTLQSSQTKELLPC. Polar residues predominate over residues 263–279; that stretch reads DSPRTLQSSQTKELLPC.

This sequence belongs to the ABC transporter superfamily. Phosphonates importer (TC 3.A.1.9.1) family. As to quaternary structure, the complex is composed of two ATP-binding proteins (PhnC), two transmembrane proteins (PhnE) and a solute-binding protein (PhnD).

Its subcellular location is the cell inner membrane. It carries out the reaction phosphonate(out) + ATP + H2O = phosphonate(in) + ADP + phosphate + H(+). In terms of biological role, part of the ABC transporter complex PhnCDE involved in phosphonates import. Responsible for energy coupling to the transport system. The chain is Phosphonates import ATP-binding protein PhnC 2 from Cupriavidus metallidurans (strain ATCC 43123 / DSM 2839 / NBRC 102507 / CH34) (Ralstonia metallidurans).